Consider the following 71-residue polypeptide: Protein translocase subunit SecE (71 aa).

A helical transmembrane segment spans residues 43-63 (VAGAGILAVGAVGFIIYVLLT).

It belongs to the SecE/SEC61-gamma family. Component of the Sec protein translocase complex. Heterotrimer consisting of SecY (alpha), SecG (beta) and SecE (gamma) subunits. The heterotrimers can form oligomers, although 1 heterotrimer is thought to be able to translocate proteins. Interacts with the ribosome. May interact with SecDF, and other proteins may be involved.

It localises to the cell membrane. Its function is as follows. Essential subunit of the Sec protein translocation channel SecYEG. Clamps together the 2 halves of SecY. May contact the channel plug during translocation. The polypeptide is Protein translocase subunit SecE (Methanosarcina mazei (strain ATCC BAA-159 / DSM 3647 / Goe1 / Go1 / JCM 11833 / OCM 88) (Methanosarcina frisia)).